Reading from the N-terminus, the 568-residue chain is DNA ligase 2 (568 aa).

ATP is bound at residue E254. K256 serves as the catalytic N6-AMP-lysine intermediate. ATP contacts are provided by R261, R276, E306, F346, R425, and K431.

It belongs to the ATP-dependent DNA ligase family. Requires Mg(2+) as cofactor.

The catalysed reaction is ATP + (deoxyribonucleotide)n-3'-hydroxyl + 5'-phospho-(deoxyribonucleotide)m = (deoxyribonucleotide)n+m + AMP + diphosphate.. Its function is as follows. DNA ligase that seals nicks in double-stranded DNA during DNA replication, DNA recombination and DNA repair. This chain is DNA ligase 2, found in Methanosarcina mazei (strain ATCC BAA-159 / DSM 3647 / Goe1 / Go1 / JCM 11833 / OCM 88) (Methanosarcina frisia).